Reading from the N-terminus, the 141-residue chain is Hemoglobin subunit alpha-D (141 aa).

The Globin domain occupies 1 to 141 (MLTADDKKLL…VAAVLAEKYR (141 aa)). Heme b-binding residues include His-58 and His-87.

The protein belongs to the globin family. Heterotetramer of two alpha-D chains and two beta chains. Red blood cells.

Functionally, involved in oxygen transport from the lung to the various peripheral tissues. The sequence is that of Hemoglobin subunit alpha-D (HBAD) from Chloephaga melanoptera (Andean goose).